Consider the following 931-residue polypeptide: Myocardin-related transcription factor A (931 aa).

A mediates interaction with SCAI and ACTB region spans residues 1–256; it reads MPPLKSPAAF…KQDRGAPPMD (256 aa). Residue Ser-6 is modified to Phosphoserine. An intervening spacer sequence 1 region spans residues 6 to 23; it reads SPAAFHEQRRSLERARTE. Residues 24-49 form an RPEL 1 repeat; the sequence is DYLKRKIRSRPERSELVRMHILEETS. The short motif at 27 to 65 is the Bipartite Nuclear localization signal element; it reads KRKIRSRPERSELVRMHILEETSAEPSLQAKQLKLKRAR. The intervening spacer sequence 2 stretch occupies residues 50–67; the sequence is AEPSLQAKQLKLKRARLA. The stretch at 68-93 is one RPEL 2 repeat; it reads DDLNEKIAQRPGPMELVEKNILPVES. 2 disordered regions span residues 110-256 and 290-344; these read ADSS…PPMD and PAPP…GALP. A phosphoserine mark is found at Ser-124, Ser-139, and Ser-156. Over residues 151–162 the composition is skewed to polar residues; the sequence is SATSASPTQVVS. Pro residues predominate over residues 180–189; it reads PPLPPPPLLP. Residues 191–215 show a composition bias toward polar residues; the sequence is SLTNGTTIPTAKSTPTLIKQSQPKS. The span at 216 to 231 shows a compositional bias: basic and acidic residues; the sequence is ASEKSQRSKKAKELKP. Position 305 is a phosphothreonine (Thr-305). Ser-310 and Ser-312 each carry phosphoserine. Residues 310 to 320 show a composition bias toward low complexity; that stretch reads SLSTTNSSSSS. Position 313 is a phosphothreonine (Thr-313). Phosphoserine is present on residues Ser-317, Ser-320, and Ser-333. Residues 347-381 form the SAP domain; that stretch reads LDDMKVAELKQELKLRSLPVSGTKTELIERLRAYQ. Phosphoserine is present on residues Ser-385 and Ser-446. The tract at residues 444 to 476 is disordered; it reads FGSTGSTPPVSPTPSERSLLSTGDENSTPGDTF. At Thr-447 the chain carries Phosphothreonine. Residue Ser-449 is modified to Phosphoserine. Thr-450 bears the Phosphothreonine mark. At Ser-454 the chain carries Phosphoserine. Thr-456 is subject to Phosphothreonine. Ser-458 bears the Phosphoserine mark. Positions 459-473 are enriched in polar residues; it reads ERSLLSTGDENSTPG. Phosphoserine occurs at positions 482, 492, 507, and 511. Residues 515 to 563 are a coiled coil; it reads RAELEGRDKDQMLQEKDKQIEALTRMLRQKQQLVERLKLQLEQEKRAQQ. Disordered regions lie at residues 558–577, 674–746, and 763–816; these read EKRA…PVKQ, KNAD…SSSQ, and ADFK…RLED. The segment covering 678-694 has biased composition (low complexity); the sequence is SPGLSSGSPQQPSSQPG. 3 positions are modified to phosphoserine: Ser-685, Ser-691, and Ser-695. The span at 732–746 shows a compositional bias: polar residues; the sequence is MSQQPKQQENGSSSQ. Over residues 763-778 the composition is skewed to basic and acidic residues; it reads ADFKEPPSLPGKEKPS. Residues 784–799 are compositionally biased toward low complexity; it reads GSPLAAQPSPSAELPQ. A phosphoserine mark is found at Ser-792, Ser-807, and Ser-859.

As to quaternary structure, interacts with SRF, forming the SRF-MRTFA nuclear complex which binds the 5'-CArG-3' consensus motif (CArG box) on DNA via SRF. Interacts (via RPEL repeats) with globular actin (G-actin), thereby regulating its subcellular location and activity of the complex formed with SRF. Either forms a trivalent (by binding three G-actin monomers) or pentavalent (by binding five G-actin monomers) complex with G-actin. Forms a nuclear ternary complex with SCAI and SRF, leading to suppress MRTFA-induced SRF transcriptional activity. Interacts with beta-actin (ACTB); interaction with ACTB prevents interaction with SCAI. Interacts with MRTFB. Phosphorylation at Ser-6 by Erk inhibits binding of globular actin (G-actin), unmasking the nuclear localization signal (NLS) and promoting nuclear import. In terms of tissue distribution, ubiquitously expressed, has been detected in lung, placenta, small intestine, liver, kidney, spleen, thymus, colon, muscle, heart and brain. Expressed in peripheral blood mononuclear cells (at protein level).

The protein localises to the cytoplasm. It localises to the nucleus. Transcription coactivator that associates with the serum response factor (SRF) transcription factor to control expression of genes regulating the cytoskeleton during development, morphogenesis and cell migration. The SRF-MRTFA complex activity responds to Rho GTPase-induced changes in cellular globular actin (G-actin) concentration, thereby coupling cytoskeletal gene expression to cytoskeletal dynamics. MRTFA binds G-actin via its RPEL repeats, regulating activity of the MRTFA-SRF complex. Activity is also regulated by filamentous actin (F-actin) in the nucleus. In Homo sapiens (Human), this protein is Myocardin-related transcription factor A.